The chain runs to 146 residues: MORN repeat-containing protein 4 (146 aa).

4 MORN repeats span residues 16–38 (YRGE…DGGT), 39–61 (YLGH…DGSR), 62–84 (YEGE…DNMT), and 85–107 (FEGE…DGSH).

In terms of assembly, interacts with MYO3A.

The protein localises to the cytoplasm. The protein resides in the cell projection. It localises to the filopodium tip. Its subcellular location is the stereocilium. In terms of biological role, plays a role in promoting axonal degeneration following neuronal injury by toxic insult or trauma. The protein is MORN repeat-containing protein 4 (MORN4) of Homo sapiens (Human).